The sequence spans 377 residues: Putative glutamate--cysteine ligase 2 (377 aa).

It belongs to the glutamate--cysteine ligase type 2 family. YbdK subfamily.

It carries out the reaction L-cysteine + L-glutamate + ATP = gamma-L-glutamyl-L-cysteine + ADP + phosphate + H(+). Its function is as follows. ATP-dependent carboxylate-amine ligase which exhibits weak glutamate--cysteine ligase activity. This is Putative glutamate--cysteine ligase 2 from Pseudomonas aeruginosa (strain LESB58).